Reading from the N-terminus, the 549-residue chain is MQPQRNLLLIGLLLVSFMLWQSWMVDKAPKTATPATAESSVPASSGGDVPNQNDASNAKHALLTLRSDVLELTVDTLGGDIVEAKLLKQTEAQGSDKPFVLLEKKPQRQYIAQSGLIGRDGVDNQAERPVYTANGTEFALVEGKDELVVPMTFTDAKGNVFTKRFVLKRESYAVGVDYQVKNVSAQPLEIQFYGQLKQTIAAPEGSSTPGMMASAFHGAAYSSAEQRYEKVNFSDIGETKLDVATQAGWAGMLQHYFVTAWTGKADAQNHIYGKAVSVNADVKDSGEAIIGIKLPLTTIAANSEAVVGTSLWIGPKLQDQMAAVAQHLDLTVDYGYLWFIAQPLFQLLQFLHGLVGNWGVAIILITMIVRGVMYPLSKAQYTSMAKMRLLQPKLTALRERLGDDRQKMSQAMMELYKEEKVNPLGGCFPLLIQMPIFIALYWTLMESVELRHAPFALWLTDLSVKDPYYVLPLLMGATMWYIQKMSPTTVTDPMQQKVMQFMPIVFTFMFLWFPSGLTLYWVVSNIVTIIQQTLIFRQLEKKGLHSRKK.

A helical membrane pass occupies residues 6–26 (NLLLIGLLLVSFMLWQSWMVD). The segment at 35-55 (ATAESSVPASSGGDVPNQNDA) is disordered. 4 helical membrane passes run 349-369 (QFLHGLVGNWGVAIILITMIV), 424-444 (LGGCFPLLIQMPIFIALYWTL), 462-482 (LSVKDPYYVLPLLMGATMWYI), and 503-523 (PIVFTFMFLWFPSGLTLYWVV).

It belongs to the OXA1/ALB3/YidC family. Type 1 subfamily. As to quaternary structure, interacts with the Sec translocase complex via SecD. Specifically interacts with transmembrane segments of nascent integral membrane proteins during membrane integration.

The protein localises to the cell inner membrane. Its function is as follows. Required for the insertion and/or proper folding and/or complex formation of integral membrane proteins into the membrane. Involved in integration of membrane proteins that insert both dependently and independently of the Sec translocase complex, as well as at least some lipoproteins. Aids folding of multispanning membrane proteins. The protein is Membrane protein insertase YidC of Tolumonas auensis (strain DSM 9187 / NBRC 110442 / TA 4).